A 352-amino-acid chain; its full sequence is MKKIVFTGGGTVGHVTLNLLLMPKFIEDGWEVHYIGDKRGIEHQEILKSGLDVTFHSIATGKLRRYFSWQNMLDVFKVGWGIVQSLFIMLRLRPQTLFSKGGFVSVPPVIAARVSGVPVFIHESDLSMGLANKIAYKFATKMYSTFEQASSLSKVEHVGAVTKVSDQKNPEPDELVDIQTHFNHKLPTVLFVGGSAGARVFNQLVTDHKKELTERYNIINLTGDSSLNELSQNLFRVDYVTDLYQPLLELADIVVTRGGANTIFELLAIAKLHVIVPLGREASRGDQIENAAYFVKKGYAEDLQESDLTLDSLEEKLSHLLSHKEDYQAKMKASKELKSLADFYQLLKKDLS.

Positions 195 and 287 each coordinate UDP-N-acetyl-alpha-D-glucosamine.

Belongs to the glycosyltransferase 28 family. MurG subfamily.

The protein localises to the cell membrane. It catalyses the reaction Mur2Ac(oyl-L-Ala-gamma-D-Glu-L-Lys-D-Ala-D-Ala)-di-trans,octa-cis-undecaprenyl diphosphate + UDP-N-acetyl-alpha-D-glucosamine = beta-D-GlcNAc-(1-&gt;4)-Mur2Ac(oyl-L-Ala-gamma-D-Glu-L-Lys-D-Ala-D-Ala)-di-trans,octa-cis-undecaprenyl diphosphate + UDP + H(+). It participates in cell wall biogenesis; peptidoglycan biosynthesis. Its function is as follows. Cell wall formation. Catalyzes the transfer of a GlcNAc subunit on undecaprenyl-pyrophosphoryl-MurNAc-pentapeptide (lipid intermediate I) to form undecaprenyl-pyrophosphoryl-MurNAc-(pentapeptide)GlcNAc (lipid intermediate II). In Streptococcus pneumoniae (strain JJA), this protein is UDP-N-acetylglucosamine--N-acetylmuramyl-(pentapeptide) pyrophosphoryl-undecaprenol N-acetylglucosamine transferase.